Reading from the N-terminus, the 327-residue chain is Interleukin-12 subunit beta (327 aa).

The N-terminal stretch at 1 to 22 is a signal peptide; it reads MHPQQLVVSWFSLVLLTSPIVA. One can recognise an Ig-like C2-type domain in the interval 23–106; the sequence is IWELEKNVYV…LSRSLLLLHK (84 aa). Cys50 and Cys90 are disulfide-bonded. A glycan (N-linked (GlcNAc...) asparagine) is linked at Asn223. The Fibronectin type-III domain occupies 238–327; that stretch reads PPKNLQLRPL…WSEWASVSCS (90 aa).

This sequence belongs to the IL-12B family. Heterodimer with IL12A; disulfide-linked. The heterodimer is known as interleukin IL-12. Heterodimer with IL23A; disulfide-linked. The heterodimer is known as interleukin IL-23. Also secreted as a monomer. Interacts with NBR1; this interaction promotes IL-12 secretion.

Its subcellular location is the secreted. Its function is as follows. Cytokine that can act as a growth factor for activated T and NK cells, enhance the lytic activity of NK/lymphokine-activated killer cells, and stimulate the production of IFN-gamma by resting PBMC. In terms of biological role, associates with IL23A to form the IL-23 interleukin, a heterodimeric cytokine which functions in innate and adaptive immunity. IL-23 may constitute with IL-17 an acute response to infection in peripheral tissues. IL-23 binds to a heterodimeric receptor complex composed of IL12RB1 and IL23R, activates the Jak-Stat signaling cascade, stimulates memory rather than naive T-cells and promotes production of pro-inflammatory cytokines. IL-23 induces autoimmune inflammation and thus may be responsible for autoimmune inflammatory diseases and may be important for tumorigenesis. The polypeptide is Interleukin-12 subunit beta (IL12B) (Cervus elaphus (Red deer)).